Consider the following 203-residue polypeptide: Thymidylate kinase (203 aa).

10–17 (GMDGAGKS) lines the ATP pocket.

The protein belongs to the thymidylate kinase family.

It carries out the reaction dTMP + ATP = dTDP + ADP. Phosphorylation of dTMP to form dTDP in both de novo and salvage pathways of dTTP synthesis. The sequence is that of Thymidylate kinase from Methylobacillus flagellatus (strain ATCC 51484 / DSM 6875 / VKM B-1610 / KT).